The sequence spans 489 residues: Long chain base biosynthesis protein 2b (489 aa).

A helical transmembrane segment spans residues 2–22 (ITIPYLTAVSTYFSYGLLFAF). N6-(pyridoxal phosphate)lysine is present on lysine 311.

This sequence belongs to the class-II pyridoxal-phosphate-dependent aminotransferase family. Heterodimer with LCB1. Component of the serine palmitoyltransferase (SPT) complex, composed of LCB1 and LCB2 (LCB2a or LCB2b). The cofactor is pyridoxal 5'-phosphate. Ubiquitous with the highest expression in flowers.

The protein localises to the endoplasmic reticulum membrane. The enzyme catalyses L-serine + hexadecanoyl-CoA + H(+) = 3-oxosphinganine + CO2 + CoA. It participates in lipid metabolism; sphingolipid metabolism. Functionally, serine palmitoyltransferase (SPT). The heterodimer formed with LCB1 constitutes the catalytic core. Plays an important role during male gametogenesis and embryogenesis. The sequence is that of Long chain base biosynthesis protein 2b (LCB2b) from Arabidopsis thaliana (Mouse-ear cress).